Here is a 588-residue protein sequence, read N- to C-terminus: Aspartate--tRNA ligase (588 aa).

Glu-174 is an L-aspartate binding site. The aspartate stretch occupies residues 198–201 (QLFK). Arg-220 contributes to the L-aspartate binding site. Residues 220–222 (RDE) and Gln-229 contribute to the ATP site. His-448 provides a ligand contact to L-aspartate. Glu-482 serves as a coordination point for ATP. Residue Arg-489 coordinates L-aspartate. 534–537 (GIDR) contacts ATP.

This sequence belongs to the class-II aminoacyl-tRNA synthetase family. Type 1 subfamily. Homodimer.

The protein resides in the cytoplasm. It catalyses the reaction tRNA(Asp) + L-aspartate + ATP = L-aspartyl-tRNA(Asp) + AMP + diphosphate. Functionally, catalyzes the attachment of L-aspartate to tRNA(Asp) in a two-step reaction: L-aspartate is first activated by ATP to form Asp-AMP and then transferred to the acceptor end of tRNA(Asp). The protein is Aspartate--tRNA ligase of Xanthomonas campestris pv. campestris (strain 8004).